The following is a 1773-amino-acid chain: Disco-interacting protein 2 (1773 aa).

One can recognise a DMAP1-binding domain in the interval 3 to 110; the sequence is HTASLPGYVR…QRHSKKIDFH (108 aa). Tyr60 and Tyr61 each carry phosphotyrosine. 2 disordered regions span residues 112–185 and 198–319; these read QAAM…YHSE and LKGR…PLSS. 2 stretches are compositionally biased toward polar residues: residues 113 to 125 and 146 to 165; these read AAMS…QSGN and YQNT…NNSQ. The segment covering 166–175 has biased composition (basic residues); sequence HRQRRTQRKV. Over residues 176 to 185 the composition is skewed to basic and acidic residues; that stretch reads THNEKRYHSE. The segment covering 224–236 has biased composition (acidic residues); that stretch reads DELDSSTDDESIP. Over residues 241–253 the composition is skewed to basic and acidic residues; it reads SPDKEYNYPRDHI. Over residues 272–297 the composition is skewed to polar residues; the sequence is SMGSQQHARTDVKQNQITNQKYTAPN.

The protein belongs to the DIP2 family. As to quaternary structure, interacts with Disco. In terms of tissue distribution, expressed in the developing nervous system. Ubiquitously expressed in the developing brain. Within the mushroom body, a higher level is detected in the core of lobes and peduncle in the late third instar larva. Detected in whole mushroom body neuron structures at 48 hours after puparium formation and during later stages.

Its subcellular location is the cell membrane. Functionally, required for precise axonal bifurcation in mushroom body neurons by suppressing ectopic bifurcation and regulating the guidance of sister axons. May function by regulating expression of tdp1. Acts downstream of the serine/threonine-protein kinase Bsk to modulate the direction of axon projection. May play a role in fatty acid metabolism. The chain is Disco-interacting protein 2 from Drosophila melanogaster (Fruit fly).